A 235-amino-acid polypeptide reads, in one-letter code: Aspartate/glutamate leucyltransferase (235 aa).

This sequence belongs to the R-transferase family. Bpt subfamily.

It is found in the cytoplasm. The catalysed reaction is N-terminal L-glutamyl-[protein] + L-leucyl-tRNA(Leu) = N-terminal L-leucyl-L-glutamyl-[protein] + tRNA(Leu) + H(+). It carries out the reaction N-terminal L-aspartyl-[protein] + L-leucyl-tRNA(Leu) = N-terminal L-leucyl-L-aspartyl-[protein] + tRNA(Leu) + H(+). Its function is as follows. Functions in the N-end rule pathway of protein degradation where it conjugates Leu from its aminoacyl-tRNA to the N-termini of proteins containing an N-terminal aspartate or glutamate. The polypeptide is Aspartate/glutamate leucyltransferase (Pseudomonas fluorescens (strain ATCC BAA-477 / NRRL B-23932 / Pf-5)).